A 103-amino-acid polypeptide reads, in one-letter code: MQNQQIRIRLKAFDHRLIDQSTQEIVETAKRTGAQVRGPIPLPTRKERYTVLISPHVNKDARDQYEIRTHKRVLDIVQPTDKTVDALMKLDLAAGVEVQISLG.

It belongs to the universal ribosomal protein uS10 family. As to quaternary structure, part of the 30S ribosomal subunit.

In terms of biological role, involved in the binding of tRNA to the ribosomes. The sequence is that of Small ribosomal subunit protein uS10 from Azotobacter vinelandii (strain DJ / ATCC BAA-1303).